The primary structure comprises 515 residues: SWI/SNF global transcription activator complex subunit snf59 (515 aa).

Residues 1-226 (MEEEDITLEH…IHHVDSKNEE (226 aa)) are disordered. Basic and acidic residues-rich tracts occupy residues 7–37 (TLEH…DNSN), 50–59 (EEPKYHDNSN), 73–85 (EPEH…KEST), 94–103 (EEPKHHDNSN), and 116–125 (EEPKHHDSSN). Polar residues predominate over residues 126 to 136 (KESTNLDNSNM). The segment covering 140–226 (ENQKNFKIEE…IHHVDSKNEE (87 aa)) has biased composition (basic and acidic residues).

The protein belongs to the RSC7/SWP82 family. SWP82 subfamily. As to quaternary structure, component of the SWI/SNF global transcription activator complex composed of at least arp9, arp42, snf5, snf22, snf30, snf59, sol1, ssr1, ssr2, ssr3, ssr4 and tfg3.

It is found in the nucleus. Component of the SWI/SNF complex, an ATP-dependent chromatin remodeling complex, which is required for the positive and negative regulation of gene expression of a large number of genes. It changes chromatin structure by altering DNA-histone contacts within a nucleosome, leading eventually to a change in nucleosome position, thus facilitating or repressing binding of gene-specific transcription factors. This Schizosaccharomyces pombe (strain 972 / ATCC 24843) (Fission yeast) protein is SWI/SNF global transcription activator complex subunit snf59 (snf59).